The sequence spans 210 residues: MSKKRSSSSNRWLNEHFKDKYVKQVHKNKSDIRSRAWFKLDDIQSSNNFLKVGMTVVDLGSSPGSWSGYAVKRVGKKGRVIACDMRPMLPIKDVVFFQGNIKNKCFFNFIETYLCHKKVHVIISDMAPNMTGHYFIDHIQAILLSKLALKMSIKVLSKGGSLLVKSFYGQEFNSFIQDVHVTFSKVKICKPNSSRARSREVYILASGRKM.

Positions 64, 66, 84, 100, and 125 each coordinate S-adenosyl-L-methionine. The active-site Proton acceptor is the lysine 165.

This sequence belongs to the class I-like SAM-binding methyltransferase superfamily. RNA methyltransferase RlmE family.

It localises to the cytoplasm. It carries out the reaction uridine(2552) in 23S rRNA + S-adenosyl-L-methionine = 2'-O-methyluridine(2552) in 23S rRNA + S-adenosyl-L-homocysteine + H(+). In terms of biological role, specifically methylates the uridine in position 2552 of 23S rRNA at the 2'-O position of the ribose in the fully assembled 50S ribosomal subunit. In Buchnera aphidicola subsp. Baizongia pistaciae (strain Bp), this protein is Ribosomal RNA large subunit methyltransferase E.